A 470-amino-acid polypeptide reads, in one-letter code: 6-phospho-beta-galactosidase (470 aa).

Residues Q19, H116, N159, E160, and N297 each coordinate D-galactose 6-phosphate. Catalysis depends on E160, which acts as the Proton donor. The Nucleophile role is filled by E375. Positions 430, 431, 437, and 439 each coordinate D-galactose 6-phosphate.

Belongs to the glycosyl hydrolase 1 family.

It carries out the reaction a 6-phospho-beta-D-galactoside + H2O = D-galactose 6-phosphate + an alcohol. It functions in the pathway carbohydrate metabolism; lactose degradation; D-galactose 6-phosphate and beta-D-glucose from lactose 6-phosphate: step 1/1. The sequence is that of 6-phospho-beta-galactosidase from Staphylococcus epidermidis (strain ATCC 35984 / DSM 28319 / BCRC 17069 / CCUG 31568 / BM 3577 / RP62A).